The chain runs to 78 residues: Large ribosomal subunit protein bL31 (78 aa).

This sequence belongs to the bacterial ribosomal protein bL31 family. Type A subfamily. Part of the 50S ribosomal subunit.

In terms of biological role, binds the 23S rRNA. This is Large ribosomal subunit protein bL31 from Rickettsia prowazekii (strain Madrid E).